The chain runs to 87 residues: Cell division protein ZapA (87 aa).

A coiled-coil region spans residues V64 to E87.

The protein belongs to the ZapA family. Type 2 subfamily. Homodimer. Interacts with FtsZ.

It localises to the cytoplasm. Functionally, activator of cell division through the inhibition of FtsZ GTPase activity, therefore promoting FtsZ assembly into bundles of protofilaments necessary for the formation of the division Z ring. It is recruited early at mid-cell but it is not essential for cell division. In Geobacillus sp. (strain WCH70), this protein is Cell division protein ZapA.